Here is a 252-residue protein sequence, read N- to C-terminus: Probable transcriptional regulatory protein Kole_1935 (252 aa).

This sequence belongs to the TACO1 family.

Its subcellular location is the cytoplasm. This Kosmotoga olearia (strain ATCC BAA-1733 / DSM 21960 / TBF 19.5.1) protein is Probable transcriptional regulatory protein Kole_1935.